The primary structure comprises 800 residues: MAALAEEQTEVAVKLEPEGPPTLLPPQAGDGAGEGSGGTTNNGPNGGGGNVAASSSTGGDGGTPKPTVAVSAAAPAGAAPVPAAAPDAGAPHDRQTLLAVLQFLRQSKLREAEEALRREAGLLEEAVAGSGAPGEVDSAGAEVTSALLSRVTASAPGPAAPDPPGTGASGATVVSGSASGPAAPGKVGSVAVEDQPDVSAVLSAYNQQGDPTMYEEYYSGLKHFIECSLDCHRAELSQLFYPLFVHMYLELVYNQHENEAKSFFEKFHGDQECYYQDDLRVLSSLTKKEHMKGNETMLDFRTSKFVLRISRDSYQLLKRHLQEKQNNQIWNIVQEHLYIDIFDGMPRSKQQIDAMVGSLAGEAKREANKSKVFFGLLKEPEIEVPLDDEDEEGENEEGKPKKKKPKKDSIGSKSKKQDPNAPPQNRIPLPELKDSDKLDKIMNMKETTKRVRLGPDCLPSICFYTFLNAYQGLTAVDVTDDSSLIAGGFADSTVRVWSVTPKKLRSVKQASDLSLIDKESDDVLERIMDEKTASELKILYGHSGPVYGASFSPDRNYLLSSSEDGTVRLWSLQTFTCLVGYKGHNYPVWDTQFSPYGYYFVSGGHDRVARLWATDHYQPLRIFAGHLADVNCTRFHPNSNYVATGSADRTVRLWDVLNGNCVRIFTGHKGPIHSLTFSPNGRFLATGATDGRVLLWDIGHGLMVGELKGHTDTVCSLRFSRDGEILASGSMDNTVRLWDAIKAFEDLETDDFTTATGHINLPENSQELLLGTYMTKSTPVVHLHFTRRNLVLAAGAYSPQ.

A disordered region spans residues 1–74 (MAALAEEQTE…KPTVAVSAAA (74 aa)). Residues 30 to 50 (DGAGEGSGGTTNNGPNGGGGN) show a composition bias toward gly residues. Positions 92–124 (HDRQTLLAVLQFLRQSKLREAEEALRREAGLLE) constitute a LisH domain. The segment at 153–189 (ASAPGPAAPDPPGTGASGATVVSGSASGPAAPGKVGS) is disordered. A compositionally biased stretch (low complexity) spans 165-189 (GTGASGATVVSGSASGPAAPGKVGS). Positions 194 to 340 (DQPDVSAVLS…NIVQEHLYID (147 aa)) are NTD2; involved in homo-dimerization; also involved in TFIID-TFIIF contacts in the RNA Pol II pre-initiation complex (PIC). Acidic residues predominate over residues 384–395 (VPLDDEDEEGEN). The tract at residues 384 to 438 (VPLDDEDEEGENEEGKPKKKKPKKDSIGSKSKKQDPNAPPQNRIPLPELKDSDKL) is disordered. Positions 407-418 (KDSIGSKSKKQD) are enriched in basic and acidic residues. WD repeat units lie at residues 468–507 (NAYQGLTAVDVTDDSSLIAGGFADSTVRVWSVTPKKLRSV), 541–580 (GHSGPVYGASFSPDRNYLLSSSEDGTVRLWSLQTFTCLVG), 583–624 (GHNY…RIFA), 625–666 (GHLA…RIFT), 667–706 (GHKGPIHSLTFSPNGRFLATGATDGRVLLWDIGHGLMVGE), and 709–748 (GHTDTVCSLRFSRDGEILASGSMDNTVRLWDAIKAFEDLE).

This sequence belongs to the WD repeat TAF5 family. As to quaternary structure, homodimer. Component of the TFIID basal transcription factor complex, composed of TATA-box-binding protein TBP, and a number of TBP-associated factors (TAFs), including TAF1, TAF2, TAF3, TAF4, TAF5, TAF6, TAF7, TAF8, TAF9, TAF10, TAF11, TAF12 and TAF13. The TFIID complex structure can be divided into 3 modules TFIID-A, TFIID-B, and TFIID-C. TAF5 forms the TFIID-A module together with TAF3 and TBP, and in TFIID-B with TAF8. Component of the TFTC-HAT complex, at least composed of TAF5L, TAF6L, TADA3L, SUPT3H/SPT3, TAF2, TAF4, TAF5, GCN5L2/GCN5, TAF10 and TRRAP. TBP is not part of the TFTC-HAT complex. Interacts strongly with the histone H4-related TAF6 and the histone H3-related TAF9, as well as a stable complex comprised of both TAF6 and TAF9. Apparently weaker interactions with TBP, TAF1, TAF11, and TAF12, but not TAF7, also have been observed. (Microbial infection) Interacts with SV40 Large T antigen.

The protein localises to the nucleus. The TFIID basal transcription factor complex plays a major role in the initiation of RNA polymerase II (Pol II)-dependent transcription. TFIID recognizes and binds promoters with or without a TATA box via its subunit TBP, a TATA-box-binding protein, and promotes assembly of the pre-initiation complex (PIC). The TFIID complex consists of TBP and TBP-associated factors (TAFs), including TAF1, TAF2, TAF3, TAF4, TAF5, TAF6, TAF7, TAF8, TAF9, TAF10, TAF11, TAF12 and TAF13. The TFIID complex structure can be divided into 3 modules TFIID-A, TFIID-B, and TFIID-C. TAF5 is involved in two modules of TFIID, in TFIID-A together with TAF3 and TBP, and in TFIID-B with TAF8. Involved in contacts between TFIID and TFIIF in the PIC. This Homo sapiens (Human) protein is Transcription initiation factor TFIID subunit 5 (TAF5).